A 419-amino-acid chain; its full sequence is L-rhamnose isomerase (419 aa).

The Mn(2+) site is built by His262, Asp294, and Asp296.

The protein belongs to the rhamnose isomerase family. Homotetramer. It depends on Mn(2+) as a cofactor.

The protein localises to the cytoplasm. It carries out the reaction L-rhamnopyranose = L-rhamnulose. It participates in carbohydrate degradation; L-rhamnose degradation; glycerone phosphate from L-rhamnose: step 1/3. In terms of biological role, catalyzes the interconversion of L-rhamnose and L-rhamnulose. The sequence is that of L-rhamnose isomerase from Shigella flexneri.